Here is a 91-residue protein sequence, read N- to C-terminus: Gas vesicle protein K (91 aa).

This sequence belongs to the gas vesicle GvpK family.

The protein resides in the gas vesicle. Functionally, might be involved in nucleating gas vesicle formation. Gas vesicles are hollow, gas filled proteinaceous nanostructures found in some microorganisms. It is not clear what function gas vesicles perform in soil bacteria. The protein is Gas vesicle protein K of Streptomyces sp. (strain CB03234).